Reading from the N-terminus, the 196-residue chain is Ankyrin repeat domain-containing protein 66 (196 aa).

ANK repeat units follow at residues 7–37 (SDMT…DPNY), 43–72 (NDRT…RPCL), and 76–105 (VGWT…AIDA). The segment at 152 to 196 (ERDEDWDAKKRELELSLPSLNQNMNKKNKKSRGPTRPSNTKGRRV) is disordered. Residues 187-196 (RPSNTKGRRV) show a composition bias toward polar residues.

The protein is Ankyrin repeat domain-containing protein 66 (ANKRD66) of Homo sapiens (Human).